Here is a 398-residue protein sequence, read N- to C-terminus: Tear acid lipase-like protein (398 aa).

The signal sequence occupies residues 1–19 (MSWLLSTMCLVHVCGNIFC). Ser-170 (nucleophile) is an active-site residue. A disulfide bridge links Cys-243 with Cys-252. An N-linked (GlcNAc...) asparagine glycan is attached at Asn-268. Catalysis depends on charge relay system residues Asp-340 and His-369.

Belongs to the AB hydrolase superfamily. Lipase family. As to quaternary structure, monomer. N-glycosylated. As to expression, expressed in female lacrimal gland acinar cells from where it is secreted into tears (at protein level).

It is found in the secreted. Its function is as follows. Female-specific protein which lacks detectable lipase activity against a range of substrates. Binds the hydrophobic lipid 1-aminoanthracene with high affinity. The protein is Tear acid lipase-like protein of Mesocricetus auratus (Golden hamster).